The following is a 300-amino-acid chain: Free fatty acid receptor 1 (300 aa).

Residues 1–8 (MALSPQLF) lie on the Extracellular side of the membrane. The helical transmembrane segment at 9 to 31 (FALYVSAFALGFPLNLLAIRGAV) threads the bilayer. Residues 32–41 (ARARLRLTPN) lie on the Cytoplasmic side of the membrane. A helical membrane pass occupies residues 42 to 64 (LVYTLHLACSDLLLAITLPVKAV). The Extracellular portion of the chain corresponds to 65–79 (EALASGAWPLPLPLC). Cys-79 and Cys-170 are joined by a disulfide. Residues 80-101 (PVFVLVHFAPLYAGGGFLAALS) traverse the membrane as a helical segment. At 102 to 121 (AGRYLGAAFPFGYQAVRRPR) the chain is on the cytoplasmic side. A helical membrane pass occupies residues 122–142 (YSWGVCVAIWALVLCHMGLVL). Residues 143-178 (GLEAPGGWLNTTSSSLGINTPVNGSPVCLEAWDPNS) lie on the Extracellular side of the membrane. N-linked (GlcNAc...) asparagine glycosylation occurs at Asn-152. Residues 179–200 (ARPARLSFSILLFFVPLVITAF) form a helical membrane-spanning segment. At 201–223 (CYVGCLRALAHSGLSHKRKLRAA) the chain is on the cytoplasmic side. Residues 224 to 248 (WAAGGAFLTLLLCLGPYNASNVASF) form a helical membrane-spanning segment. Residues 249–256 (VNPDLGGS) lie on the Extracellular side of the membrane. Residues 257–279 (WRKLGLITGSWSVVLNPLVTGYL) form a helical membrane-spanning segment. Over 280–300 (GASPGRGTVCTTRTQGGTIQK) the chain is Cytoplasmic.

The protein belongs to the G-protein coupled receptor 1 family.

The protein localises to the cell membrane. G-protein coupled receptor for medium and long chain saturated and unsaturated fatty acids that plays an important role in glucose homeostasis. Fatty acid binding increases glucose-stimulated insulin secretion, and may also enhance the secretion of glucagon-like peptide 1 (GLP-1). May also play a role in bone homeostasis; receptor signaling activates pathways that inhibit osteoclast differentiation. Ligand binding leads to a conformation change that triggers signaling via G-proteins that activate phospholipase C, leading to an increase of the intracellular calcium concentration. Seems to act through a G(q) and G(i)-mediated pathway. Mediates the anti-inflammatory effects of omega-3 polyunsaturated fatty acids (PUFAs) via inhibition of NLRP3 inflammasome activation. The sequence is that of Free fatty acid receptor 1 (FFAR1) from Mesocricetus auratus (Golden hamster).